A 123-amino-acid polypeptide reads, in one-letter code: Potassium voltage-gated channel subfamily E member 2 (123 aa).

N-linked (GlcNAc...) asparagine glycosylation is found at N6 and N29. The helical transmembrane segment at 49–69 (VILYLMVMIGMFAFIVVAILV) threads the bilayer. At 70 to 123 (STVKSKRREHSQDPYHQYIVEDWQQKYRSQILHLEDSKATIHENLGATGFTVSP) the chain is on the cytoplasmic side.

Belongs to the potassium channel KCNE family. In terms of assembly, interacts with KCNB1. Associates with KCNH2/ERG1. May associate with KCNQ2 and KCNQ3. Associates with HCN1 and probably HCN2. Heteromultimer with KCNC2. Interacts with KCNC2. Interacts with KCNQ1; forms a heterooligomer complex that targets to the membrane raft and leading to currents with an apparently instantaneous activation, a rapid deactivation process and a linear current-voltage relationship and decreases the amplitude of the outward current.

The protein localises to the cell membrane. It is found in the apical cell membrane. Functionally, ancillary protein that functions as a regulatory subunit of the voltage-gated potassium (Kv) channel complex composed of pore-forming and potassium-conducting alpha subunits and of regulatory beta subunits. KCNE2 beta subunit modulates the gating kinetics and enhances stability of the channel complex. Alters the gating of the delayed rectifier Kv channel containing KCNB1 alpha subunit. Associates with KCNH2/HERG alpha subunit Kv channel to form the rapidly activating component of the delayed rectifying potassium current (IKr) in heart. May associate with KCNQ2 and/or KCNQ3 alpha subunits to modulate the native M-type current. May associate with HCN1 and HCN2 channel subunits to increase potassium current. Forms a heterooligomer complex with KCNQ1/KVLQT1 alpha subunits which leads to currents with an apparently instantaneous activation, a rapid deactivation process and a linear current-voltage relationship and decreases the amplitude of the outward current. KCNQ1-KCNE2 channel associates with Na(+)-coupled myo-inositol symporter in the apical membrane of choroid plexus epithelium and regulates the myo-inositol gradient between blood and cerebrospinal fluid with an impact on neuron excitability. The chain is Potassium voltage-gated channel subfamily E member 2 (Kcne2) from Cavia porcellus (Guinea pig).